Consider the following 396-residue polypeptide: Putative ribosomal RNA large subunit methyltransferase YwbD (396 aa).

The PUA domain maps to 1–79 (MKLLTLKKAH…KHEQIDQAFF (79 aa)).

It belongs to the methyltransferase superfamily. RlmI family.

The protein resides in the cytoplasm. The polypeptide is Putative ribosomal RNA large subunit methyltransferase YwbD (ywbD) (Bacillus subtilis (strain 168)).